The sequence spans 106 residues: ATP-dependent Clp protease adapter protein ClpS (106 aa).

Positions 1 to 13 (MPRKTSHEHDHGL) are enriched in basic and acidic residues. A disordered region spans residues 1–21 (MPRKTSHEHDHGLVVETSKPE).

It belongs to the ClpS family. In terms of assembly, binds to the N-terminal domain of the chaperone ClpA.

In terms of biological role, involved in the modulation of the specificity of the ClpAP-mediated ATP-dependent protein degradation. The chain is ATP-dependent Clp protease adapter protein ClpS from Xanthomonas campestris pv. campestris (strain 8004).